We begin with the raw amino-acid sequence, 249 residues long: Chitooligosaccharide deacetylase (249 aa).

Mg(2+) contacts are provided by H61 and H125.

Belongs to the YdjC deacetylase family. ChbG subfamily. In terms of assembly, homodimer. Requires Mg(2+) as cofactor.

It localises to the cytoplasm. The enzyme catalyses N,N'-diacetylchitobiose + H2O = N-acetyl-beta-D-glucosaminyl-(1-&gt;4)-D-glucosamine + acetate. It catalyses the reaction diacetylchitobiose-6'-phosphate + H2O = N'-monoacetylchitobiose-6'-phosphate + acetate. It functions in the pathway glycan degradation; chitin degradation. Involved in the degradation of chitin. ChbG is essential for growth on the acetylated chitooligosaccharides chitobiose and chitotriose but is dispensable for growth on cellobiose and chitosan dimer, the deacetylated form of chitobiose. Deacetylation of chitobiose-6-P and chitotriose-6-P is necessary for both the activation of the chb promoter by the regulatory protein ChbR and the hydrolysis of phosphorylated beta-glucosides by the phospho-beta-glucosidase ChbF. Catalyzes the removal of only one acetyl group from chitobiose-6-P to yield monoacetylchitobiose-6-P, the inducer of ChbR and the substrate of ChbF. The sequence is that of Chitooligosaccharide deacetylase from Escherichia coli O7:K1 (strain IAI39 / ExPEC).